Consider the following 180-residue polypeptide: Ribulose bisphosphate carboxylase small subunit, chloroplastic (180 aa).

The N-terminal 57 residues, 1–57 (MASVVASAAVVTPFAASAASTTKSSQIVSVQAGLKAGVFGGKSEWQTKTQTNGSRVS), are a transit peptide targeting the chloroplast.

It belongs to the RuBisCO small chain family. In terms of assembly, heterohexadecamer of 8 large and 8 small subunits.

The protein resides in the plastid. Its subcellular location is the chloroplast. Its function is as follows. RuBisCO catalyzes two reactions: the carboxylation of D-ribulose 1,5-bisphosphate, the primary event in carbon dioxide fixation, as well as the oxidative fragmentation of the pentose substrate. Both reactions occur simultaneously and in competition at the same active site. Although the small subunit is not catalytic it is essential for maximal activity. The chain is Ribulose bisphosphate carboxylase small subunit, chloroplastic from Marchantia paleacea (Liverwort).